Consider the following 110-residue polypeptide: Phosphoribosyl-ATP pyrophosphatase (110 aa).

This sequence belongs to the PRA-PH family.

Its subcellular location is the cytoplasm. It catalyses the reaction 1-(5-phospho-beta-D-ribosyl)-ATP + H2O = 1-(5-phospho-beta-D-ribosyl)-5'-AMP + diphosphate + H(+). The protein operates within amino-acid biosynthesis; L-histidine biosynthesis; L-histidine from 5-phospho-alpha-D-ribose 1-diphosphate: step 2/9. The chain is Phosphoribosyl-ATP pyrophosphatase from Clostridium novyi (strain NT).